The primary structure comprises 618 residues: DNA mismatch repair protein MutL (618 aa).

The protein belongs to the DNA mismatch repair MutL/HexB family.

Functionally, this protein is involved in the repair of mismatches in DNA. It is required for dam-dependent methyl-directed DNA mismatch repair. May act as a 'molecular matchmaker', a protein that promotes the formation of a stable complex between two or more DNA-binding proteins in an ATP-dependent manner without itself being part of a final effector complex. This is DNA mismatch repair protein MutL from Porphyromonas gingivalis (strain ATCC 33277 / DSM 20709 / CIP 103683 / JCM 12257 / NCTC 11834 / 2561).